The chain runs to 456 residues: uncharacterized protein (456 aa).

2 stretches are compositionally biased toward basic and acidic residues: residues 181–210 (DQRK…DKKV) and 217–231 (KEIE…ENEE). Residues 181 to 231 (DQRKESIVNDERKKNPEFREKPDKNEDKKVKPPPSLKEIENKGIDHEENEE) form a disordered region. Residues 216–248 (LKEIENKGIDHEENEEDKKRELMFKLQLLQKQY) adopt a coiled-coil conformation. A helical membrane pass occupies residues 347–365 (LALAILFNAVWFIAAKMIM). Polar residues predominate over residues 383-407 (NKSGTTPNSVSPRTWGNSKSPQSEF). Residues 383–456 (NKSGTTPNSV…MREQGIETLK (74 aa)) are disordered. Residues 441 to 456 (DESRREMREQGIETLK) are compositionally biased toward basic and acidic residues.

Belongs to the IIV-6 067R family.

Its subcellular location is the membrane. This is an uncharacterized protein from Invertebrate iridescent virus 6 (IIV-6).